The primary structure comprises 118 residues: Large ribosomal subunit protein bL19 (118 aa).

Belongs to the bacterial ribosomal protein bL19 family.

In terms of biological role, this protein is located at the 30S-50S ribosomal subunit interface and may play a role in the structure and function of the aminoacyl-tRNA binding site. The protein is Large ribosomal subunit protein bL19 of Helicobacter pylori (strain HPAG1).